Reading from the N-terminus, the 325-residue chain is tRNA dimethylallyltransferase (325 aa).

16 to 23 contributes to the ATP binding site; the sequence is GPTASGKT. 18–23 contacts substrate; the sequence is TASGKT. 4 interaction with substrate tRNA regions span residues 41–44, 165–169, 253–258, and 286–293; these read DSAL, QRIQR, RCVGYR, and KRQITWLR.

It belongs to the IPP transferase family. Monomer. Mg(2+) serves as cofactor.

It catalyses the reaction adenosine(37) in tRNA + dimethylallyl diphosphate = N(6)-dimethylallyladenosine(37) in tRNA + diphosphate. Functionally, catalyzes the transfer of a dimethylallyl group onto the adenine at position 37 in tRNAs that read codons beginning with uridine, leading to the formation of N6-(dimethylallyl)adenosine (i(6)A). This is tRNA dimethylallyltransferase from Ralstonia pickettii (strain 12J).